The chain runs to 176 residues: Sperm-egg fusion protein TMEM95 (176 aa).

The signal sequence occupies residues 1 to 16; sequence MWRLALGGVFLAAAQA. 4 disulfide bridges follow: C17–C118, C20–C121, C105–C128, and C109–C134. Over 17-145 the chain is Extracellular; sequence CVFCRLPAHD…PGSQDLWEAK (129 aa). Residues 146 to 166 traverse the membrane as a helical segment; that stretch reads ILLLSIFGAFLLLGVLSLLVE. Over 167-176 the chain is Cytoplasmic; that stretch reads SHHLQAKSGL.

It belongs to the TMEM95 family. In terms of assembly, does not interact with sperm-egg fusion proteins IZUMO1 or IZUMO1R/JUNO. Post-translationally, N-glycosylated. As to expression, spermatozoa (at protein level).

It is found in the cytoplasmic vesicle. It localises to the secretory vesicle. Its subcellular location is the acrosome membrane. In terms of biological role, sperm protein required for fusion of sperm with the egg membrane during fertilization. The polypeptide is Sperm-egg fusion protein TMEM95 (Homo sapiens (Human)).